Consider the following 102-residue polypeptide: ATP-dependent Clp protease adapter protein ClpS (102 aa).

A compositionally biased stretch (basic and acidic residues) spans M1–L18. The disordered stretch occupies residues M1 to P21.

The protein belongs to the ClpS family. Binds to the N-terminal domain of the chaperone ClpA.

Its function is as follows. Involved in the modulation of the specificity of the ClpAP-mediated ATP-dependent protein degradation. The protein is ATP-dependent Clp protease adapter protein ClpS of Idiomarina loihiensis (strain ATCC BAA-735 / DSM 15497 / L2-TR).